Consider the following 997-residue polypeptide: Protein argonaute 5 (997 aa).

Gly residues-rich tracts occupy residues 1 to 16 and 43 to 59; these read MSNRGGGGHGGASRGR and GGRGGSVSAGRGRGNVG. The interval 1–144 is disordered; the sequence is MSNRGGGGHG…TSLPPASSKA (144 aa). A compositionally biased stretch (low complexity) spans 93–106; that stretch reads SVASSSKTVSVASS. Residues 116–129 are compositionally biased toward polar residues; the sequence is VSETMSNLQITSTE. One can recognise a PAZ domain in the interval 360 to 471; it reads VVTDFISKFL…LPMELCQIDE (112 aa). The Piwi domain maps to 638–958; it reads LLIVILPDVT…AAFRARYYME (321 aa). A divalent metal cation is bound by residues D721 and D807. Interaction with guide RNA stretches follow at residues 847–848, 893–901, and 930–952; these read KR, HAGIQGTSR, and YARCTKSVSIVPPAYYAHLAAFR. H947 is a binding site for a divalent metal cation.

Belongs to the argonaute family. Ago subfamily. Mg(2+) serves as cofactor. Requires Mn(2+) as cofactor.

In terms of biological role, involved in RNA-mediated post-transcriptional gene silencing (PTGS). Main component of the RNA-induced silencing complex (RISC) that binds to a short guide RNA such as a microRNA (miRNA) or small interfering RNA (siRNA). RISC uses the mature miRNA or siRNA as a guide for slicer-directed cleavage of homologous mRNAs to repress gene expression. Associates with siRNAs of various sizes, from 21-24 nucleotide in length and preferentially recruits small RNAs with a 5' terminal cytosine. Probably involved in antiviral RNA silencing. Associates with siRNAs derived from cucumber mosaic virus (CMV). Targeted by the turnip yellows virus (TuYV) protein P0 (via F-box-like domain) for probable proteasome degradation and thereby inactivating AGO5 function in RNA silencing. In Arabidopsis thaliana (Mouse-ear cress), this protein is Protein argonaute 5 (AGO5).